Here is a 283-residue protein sequence, read N- to C-terminus: Tetraspanin-33 (283 aa).

The Cytoplasmic segment spans residues methionine 1 to tyrosine 24. The helical transmembrane segment at leucine 25–valine 45 threads the bilayer. Over tyrosine 46–proline 64 the chain is Extracellular. The chain crosses the membrane as a helical span at residues alanine 65–glycine 85. At serine 86–threonine 96 the chain is on the cytoplasmic side. A helical transmembrane segment spans residues phenylalanine 97–valine 117. Residues phenylalanine 118–asparagine 235 are Extracellular-facing. Disulfide bonds link cysteine 156/cysteine 224, cysteine 157/cysteine 189, cysteine 173/cysteine 183, and cysteine 190/cysteine 203. The N-linked (GlcNAc...) asparagine glycan is linked to asparagine 172. A helical transmembrane segment spans residues leucine 236 to leucine 256. Over serine 257–tyrosine 283 the chain is Cytoplasmic.

The protein belongs to the tetraspanin (TM4SF) family. As to quaternary structure, homodimer; disulfide-linked. Interacts (via extracellular domain) with ADAM10 (via extracellular domain). Interacts (via cytoplasmic domain) with PLEKHA7 (via WW domains); the interaction is dependent on PDZD11 being bound to PLEKHA7 and facilitates the docking of ADAM10 to zonula adherens. As to expression, predominantly expressed in erythroblasts.

The protein localises to the cell membrane. It is found in the cell junction. Its subcellular location is the adherens junction. The protein resides in the cytoplasm. Part of TspanC8 subgroup, composed of 6 members that interact with the transmembrane metalloprotease ADAM10. This interaction is required for ADAM10 exit from the endoplasmic reticulum and for enzymatic maturation and trafficking to the cell surface as well as substrate specificity. Different TspanC8/ADAM10 complexes have distinct substrates. Plays an important role in normal erythropoiesis. It has a role in the differentiation of erythroid progenitors. Negatively regulates ligand-induced Notch activity probably by regulating ADAM10 activity. Mediates docking of ADAM10 to zonula adherens by interacting with ADAM10 and, in a PDZD11-dependent manner, with the zonula adherens protein PLEKHA7. This Mus musculus (Mouse) protein is Tetraspanin-33 (Tspan33).